The primary structure comprises 174 residues: Eukaryotic translation elongation factor 1 epsilon-1 (174 aa).

Alanine 2 carries the N-acetylalanine modification. Residues 2–56 are N-terminal; the sequence is AAAAELSLLEKSLGLSKGNKYSAQGERQIPVLQTNNGPSLTGLTTIAAHLVKQAN. The region spanning 50 to 173 is the GST C-terminal domain; the sequence is HLVKQANKEY…FIKNRLYTNS (124 aa). The segment at 57–63 is linker; that stretch reads KEYLLGS. Residues 64–152 are C-terminal; the sequence is TAEEKAIVQQ…SRWFCHIQHY (89 aa). Lysine 138 carries the N6-acetyllysine modification. The stretch at 153-169 forms a coiled coil; it reads PGIRQHLSSVVFIKNRL.

As to quaternary structure, part of a multisubunit complex that groups tRNA ligases for Arg (RARS1), Asp (DARS1), Gln (QARS1), Ile (IARS1), Leu (LARS1), Lys (KARS1), Met (MARS1) the bifunctional ligase for Glu and Pro (EPRS1) and the auxiliary subunits AIMP1/p43, AIMP2/p38 and EEF1E1/p18. Can interact simultaneously with MARS1 and EPRS1. Forms a linear complex that contains MARS1, EEF1E1, EPRS1 and AIMP2 that is at the core of the multisubunit complex. Interacts with ATM and ATR. The interaction with ATM, which takes place independently of TP53, is induced by DNA damage that may occur during genotoxic stress or cell growth. The interaction with ATR is enhanced by UV irradiation. As to expression, down-regulated in various cancer tissues.

The protein localises to the cytoplasm. Its subcellular location is the cytosol. The protein resides in the nucleus. In terms of biological role, positive modulator of ATM response to DNA damage. This Homo sapiens (Human) protein is Eukaryotic translation elongation factor 1 epsilon-1 (EEF1E1).